The following is a 639-amino-acid chain: 3-hydroxybenzoate 4-monooxygenase (639 aa).

FAD-binding positions include Asp-34 to Gln-64, Gln-73, Val-166, Asn-212, Arg-269 to Tyr-271, Tyr-317, Asp-349, and Ser-365.

This sequence belongs to the PheA/TfdB FAD monooxygenase family. In terms of assembly, homodimer. Requires FAD as cofactor.

The catalysed reaction is 3-hydroxybenzoate + NADPH + O2 + H(+) = 3,4-dihydroxybenzoate + NADP(+) + H2O. In terms of biological role, converts 3-hydroxybenzoate (m-hydroxybenzoate), and to a lesser extent p-hydroxybenzoate, to 3,4-dihydroxybenzoate (protocatechuate). Also acts on a number of analogs of 3-hydroxybenzoate substituted in the 2, 4, 5 and 6 positions. This Comamonas testosteroni (Pseudomonas testosteroni) protein is 3-hydroxybenzoate 4-monooxygenase (mobA).